Reading from the N-terminus, the 104-residue chain is L-rhamnose mutarotase (104 aa).

Residue Tyr-18 participates in substrate binding. Catalysis depends on His-22, which acts as the Proton donor. Residues Tyr-41 and 76-77 (WW) contribute to the substrate site.

This sequence belongs to the rhamnose mutarotase family. In terms of assembly, homodimer.

The protein resides in the cytoplasm. It carries out the reaction alpha-L-rhamnose = beta-L-rhamnose. The protein operates within carbohydrate metabolism; L-rhamnose metabolism. Functionally, involved in the anomeric conversion of L-rhamnose. The polypeptide is L-rhamnose mutarotase (Escherichia coli (strain K12 / MC4100 / BW2952)).